The sequence spans 296 residues: Nucleotide-binding protein RSc0403 (296 aa).

Residue 8–15 (GMSGSGKS) participates in ATP binding. 57-60 (DIRS) contributes to the GTP binding site. A disordered region spans residues 99 to 124 (TRRRHPLSIRNGRPDAGNPPSAAKGP).

Belongs to the RapZ-like family.

Functionally, displays ATPase and GTPase activities. This Ralstonia nicotianae (strain ATCC BAA-1114 / GMI1000) (Ralstonia solanacearum) protein is Nucleotide-binding protein RSc0403.